We begin with the raw amino-acid sequence, 609 residues long: 2',5'-phosphodiesterase 12 (609 aa).

The transit peptide at Met-1 to Cys-42 directs the protein to the mitochondrion. Basic residues predominate over residues Ala-89–Arg-99. 2 disordered regions span residues Ala-89–Pro-111 and Ala-206–Val-230. 2 stretches are compositionally biased toward low complexity: residues Pro-100–Pro-111 and Pro-213–Ser-224. Phosphoserine is present on Ser-217. Mg(2+)-binding residues include Glu-351, Asp-496, and Asn-498. Asp-496 acts as the Proton donor/acceptor in catalysis.

The protein belongs to the CCR4/nocturin family. The cofactor is Mg(2+). Ubiquitous.

It is found in the mitochondrion matrix. It carries out the reaction Exonucleolytic cleavage of poly(A) to 5'-AMP.. Enzyme that cleaves 2',5'-phosphodiester bond linking adenosines of the 5'-triphosphorylated oligoadenylates, triphosphorylated oligoadenylates referred as 2-5A modulates the 2-5A system. Degrades triphosphorylated 2-5A to produce AMP and ATP. Also cleaves 3',5'-phosphodiester bond of oligoadenylates. Plays a role as a negative regulator of the 2-5A system that is one of the major pathways for antiviral and antitumor functions induced by interferons (IFNs). Suppression of this enzyme increases cellular 2-5A levels and decreases viral replication in cultured small-airway epithelial cells and Hela cells. This Homo sapiens (Human) protein is 2',5'-phosphodiesterase 12 (PDE12).